The sequence spans 125 residues: Putative iron-sulfur cluster insertion protein ErpA 2 (125 aa).

Residues Cys53, Cys117, and Cys119 each contribute to the iron-sulfur cluster site.

The protein belongs to the HesB/IscA family. As to quaternary structure, homodimer. Iron-sulfur cluster serves as cofactor.

In terms of biological role, required for insertion of 4Fe-4S clusters. In Polaromonas naphthalenivorans (strain CJ2), this protein is Putative iron-sulfur cluster insertion protein ErpA 2.